A 210-amino-acid polypeptide reads, in one-letter code: Imidazoleglycerol-phosphate dehydratase (210 aa).

Residues 185-210 (PRRGGSIPSSKGVLEQAGDNNTEKSK) form a disordered region.

It belongs to the imidazoleglycerol-phosphate dehydratase family.

The protein resides in the cytoplasm. The enzyme catalyses D-erythro-1-(imidazol-4-yl)glycerol 3-phosphate = 3-(imidazol-4-yl)-2-oxopropyl phosphate + H2O. It participates in amino-acid biosynthesis; L-histidine biosynthesis; L-histidine from 5-phospho-alpha-D-ribose 1-diphosphate: step 6/9. In Prochlorococcus marinus (strain SARG / CCMP1375 / SS120), this protein is Imidazoleglycerol-phosphate dehydratase.